We begin with the raw amino-acid sequence, 231 residues long: Sec-independent protein translocase protein TatB (231 aa).

The helical transmembrane segment at 1-21 (MFDIGFSELLLFGVIALIVLG) threads the bilayer. The segment at 77-168 (MRREMAEMRG…SLKTDFNDNA (92 aa)) is disordered. Basic and acidic residues predominate over residues 101-111 (ASRDLVDDAKP). Polar residues predominate over residues 148–157 (SEQPSAQGDN).

Belongs to the TatB family. In terms of assembly, the Tat system comprises two distinct complexes: a TatABC complex, containing multiple copies of TatA, TatB and TatC subunits, and a separate TatA complex, containing only TatA subunits. Substrates initially bind to the TatABC complex, which probably triggers association of the separate TatA complex to form the active translocon.

The protein resides in the cell inner membrane. Functionally, part of the twin-arginine translocation (Tat) system that transports large folded proteins containing a characteristic twin-arginine motif in their signal peptide across membranes. Together with TatC, TatB is part of a receptor directly interacting with Tat signal peptides. TatB may form an oligomeric binding site that transiently accommodates folded Tat precursor proteins before their translocation. The polypeptide is Sec-independent protein translocase protein TatB (Psychrobacter cryohalolentis (strain ATCC BAA-1226 / DSM 17306 / VKM B-2378 / K5)).